We begin with the raw amino-acid sequence, 312 residues long: MRNHTTVANFILLGLTDDPQLQVIIFLLLFFTYMLSITGNLTIITLTLLDLHLKTPMYFFLRNFSFLEVSFTTVYIPKFLVSMATGDKTISYNDCAAQLFFTILLGATEFFLLAAMSYERYVAICKPLHYTTIMSSRVCSLLVFASWMAGFLIIFPPLLMGLQLDFCAANTVDHFFCDVSPILQLSCTDTDIIELMMLLSAILTLLVTLVLVILSYTNIIRTILKIPSSQQRKKAFSTCSSHMVVVSISYGSCIFMYVKPSAKERVSLNKGIALLSTSVAPMLNPFIYTLRNKQVKDVFKHTVKKIELFSMK.

The Extracellular segment spans residues 1-23; sequence MRNHTTVANFILLGLTDDPQLQV. Asparagine 3 is a glycosylation site (N-linked (GlcNAc...) asparagine). Residues 24–44 traverse the membrane as a helical segment; sequence IIFLLLFFTYMLSITGNLTII. Topologically, residues 45–63 are cytoplasmic; sequence TLTLLDLHLKTPMYFFLRN. Residues 64–84 traverse the membrane as a helical segment; the sequence is FSFLEVSFTTVYIPKFLVSMA. Topologically, residues 85–95 are extracellular; the sequence is TGDKTISYNDC. A disulfide bridge links cysteine 95 with cysteine 177. A helical transmembrane segment spans residues 96–116; that stretch reads AAQLFFTILLGATEFFLLAAM. Residues 117–140 lie on the Cytoplasmic side of the membrane; sequence SYERYVAICKPLHYTTIMSSRVCS. A helical membrane pass occupies residues 141–161; sequence LLVFASWMAGFLIIFPPLLMG. The Extracellular portion of the chain corresponds to 162–194; sequence LQLDFCAANTVDHFFCDVSPILQLSCTDTDIIE. A helical membrane pass occupies residues 195–215; that stretch reads LMMLLSAILTLLVTLVLVILS. At 216–237 the chain is on the cytoplasmic side; the sequence is YTNIIRTILKIPSSQQRKKAFS. The helical transmembrane segment at 238–258 threads the bilayer; the sequence is TCSSHMVVVSISYGSCIFMYV. At 259-269 the chain is on the extracellular side; the sequence is KPSAKERVSLN. The chain crosses the membrane as a helical span at residues 270–290; it reads KGIALLSTSVAPMLNPFIYTL. Residues 291-312 lie on the Cytoplasmic side of the membrane; the sequence is RNKQVKDVFKHTVKKIELFSMK.

This sequence belongs to the G-protein coupled receptor 1 family.

The protein resides in the cell membrane. Functionally, odorant receptor. This chain is Olfactory receptor 6C74 (OR6C74), found in Homo sapiens (Human).